Consider the following 268-residue polypeptide: Phosphatidylglycerol--prolipoprotein diacylglyceryl transferase (268 aa).

Transmembrane regions (helical) follow at residues 14-34 (LGPIKIHWYGLMYLLGIFAGW), 57-77 (LTFYVALGVILGGRIGYIIFY), 90-110 (FFLWDGGMSFHGGFIGVLIAF), and 117-137 (IGANFFDLGEFVAPVIPIGLG). A 1,2-diacyl-sn-glycero-3-phospho-(1'-sn-glycerol) is bound at residue Arg140. Transmembrane regions (helical) follow at residues 174 to 194 (QLFEFFFEGVVLFSVLWLVTI), 200 to 220 (YLVLGLFMFLYGCARFICEFF), and 238 to 258 (GQILSIPMILLGAVILIAVFI).

Belongs to the Lgt family.

The protein resides in the cell inner membrane. It catalyses the reaction L-cysteinyl-[prolipoprotein] + a 1,2-diacyl-sn-glycero-3-phospho-(1'-sn-glycerol) = an S-1,2-diacyl-sn-glyceryl-L-cysteinyl-[prolipoprotein] + sn-glycerol 1-phosphate + H(+). Its pathway is protein modification; lipoprotein biosynthesis (diacylglyceryl transfer). Its function is as follows. Catalyzes the transfer of the diacylglyceryl group from phosphatidylglycerol to the sulfhydryl group of the N-terminal cysteine of a prolipoprotein, the first step in the formation of mature lipoproteins. This chain is Phosphatidylglycerol--prolipoprotein diacylglyceryl transferase, found in Francisella tularensis subsp. novicida (strain U112).